A 313-amino-acid polypeptide reads, in one-letter code: Dihydroorotate dehydrogenase (fumarate) (313 aa).

FMN-binding positions include alanine 20 and 44-45 (KS). Substrate is bound by residues lysine 44, 68–72 (NSMGL), and asparagine 128. FMN is bound at residue asparagine 128. Cysteine 131 serves as the catalytic Nucleophile. Asparagine 133 is a binding site for substrate. The FMN site is built by lysine 165 and valine 194. 195–196 (NS) serves as a coordination point for substrate. FMN contacts are provided by residues glycine 223, cysteine 249, 249 to 251 (CGG), and 272 to 273 (GT).

This sequence belongs to the dihydroorotate dehydrogenase family. Type 1 subfamily. In terms of assembly, homodimer. Requires FMN as cofactor.

It is found in the cytoplasm. The enzyme catalyses (S)-dihydroorotate + fumarate = orotate + succinate. Its pathway is pyrimidine metabolism; UMP biosynthesis via de novo pathway. In terms of biological role, catalyzes the conversion of dihydroorotate to orotate with fumarate as the electron acceptor. Molecular oxygen can replace fumarate in vitro. The sequence is that of Dihydroorotate dehydrogenase (fumarate) from Trypanosoma brucei brucei (strain 927/4 GUTat10.1).